The sequence spans 555 residues: MVYDYIIIGAGSAGNVLATRLTEDPDVTVLLLEAGGPDYRFDFRTQMPAALAYPLQGRRYNWAYETEPEPHMNNRRMECGRGKGLGGSSLINGMCYIRGNAMDFDEWAKLPGLEDWNYLNCLPYFRKAETRDIGANDYHGDSGPVSVTTPKKGNNVLFHAMVEAGVQAGYPRTDDLNGYQQEGFGPMDRTVTPHGRRASTARGYLDQAKSRKNLTIETHATTDIIEFEGKKASGVRYFKGTNTTPQHVKARKEILLCAGAIASPQILQRSGVGPEDVLNEFDISPVHVLPGVGQNLQDHLEMYLQYECKQPVSLYPALKWYNQPKIGAEWLFKGTGIGASNQFEAGGFIRSSEKFAWPNIQFHFLPVAINYNGSNAVEVHGFQAHVGSMRSPSRGRIKITSRDPHQHPSILFNYMSTEQDWQEFRAAIRITREIMAQPALDPYRGEEISPGKDIQTDEQLDAFVRERAETAFHPCGSCKMGNDEMAVVDGAGRVHGIESLRVIDASIMPNIITGNLNATTIMIAEKMADKIKGIKPLPASQADYYVAGHSPARRN.

Asp4–Glu33 contacts FAD. Catalysis depends on His473, which acts as the Proton acceptor.

The protein belongs to the GMC oxidoreductase family. It depends on FAD as a cofactor.

It carries out the reaction choline + A = betaine aldehyde + AH2. The enzyme catalyses betaine aldehyde + NAD(+) + H2O = glycine betaine + NADH + 2 H(+). It functions in the pathway amine and polyamine biosynthesis; betaine biosynthesis via choline pathway; betaine aldehyde from choline (cytochrome c reductase route): step 1/1. Its function is as follows. Involved in the biosynthesis of the osmoprotectant glycine betaine. Catalyzes the oxidation of choline to betaine aldehyde and betaine aldehyde to glycine betaine at the same rate. This chain is Oxygen-dependent choline dehydrogenase, found in Proteus mirabilis (strain HI4320).